Consider the following 331-residue polypeptide: Adenosine deaminase (331 aa).

Zn(2+) contacts are provided by H12 and H14. Residues H14 and D16 each contribute to the substrate site. Residue H197 coordinates Zn(2+). E200 acts as the Proton donor in catalysis. D278 lines the Zn(2+) pocket.

This sequence belongs to the metallo-dependent hydrolases superfamily. Adenosine and AMP deaminases family. Adenosine deaminase subfamily. Zn(2+) is required as a cofactor.

The enzyme catalyses adenosine + H2O + H(+) = inosine + NH4(+). The catalysed reaction is 2'-deoxyadenosine + H2O + H(+) = 2'-deoxyinosine + NH4(+). Its function is as follows. Catalyzes the hydrolytic deamination of adenosine and 2-deoxyadenosine. This chain is Adenosine deaminase, found in Shewanella pealeana (strain ATCC 700345 / ANG-SQ1).